The chain runs to 115 residues: Aspartate 1-decarboxylase (115 aa).

Residue serine 25 is the Schiff-base intermediate with substrate; via pyruvic acid of the active site. Serine 25 is subject to Pyruvic acid (Ser). Threonine 57 contacts substrate. Tyrosine 58 acts as the Proton donor in catalysis. 72-74 contributes to the substrate binding site; that stretch reads GAA.

The protein belongs to the PanD family. In terms of assembly, heterooctamer of four alpha and four beta subunits. It depends on pyruvate as a cofactor. Is synthesized initially as an inactive proenzyme, which is activated by self-cleavage at a specific serine bond to produce a beta-subunit with a hydroxyl group at its C-terminus and an alpha-subunit with a pyruvoyl group at its N-terminus.

Its subcellular location is the cytoplasm. The enzyme catalyses L-aspartate + H(+) = beta-alanine + CO2. Its pathway is cofactor biosynthesis; (R)-pantothenate biosynthesis; beta-alanine from L-aspartate: step 1/1. Its function is as follows. Catalyzes the pyruvoyl-dependent decarboxylation of aspartate to produce beta-alanine. The sequence is that of Aspartate 1-decarboxylase from Campylobacter fetus subsp. fetus (strain 82-40).